The sequence spans 264 residues: Sirohydrochlorin cobaltochelatase (264 aa).

Co-sirohydrochlorin-binding residues include Gly-45, Ile-84, Ile-85, Asp-88, Glu-89, and Lys-92. His-145 acts as the Proton acceptor in catalysis. His-145 and Glu-175 together coordinate Co(2+). Residues Leu-202, Val-203, and His-207 each contribute to the Co-sirohydrochlorin site. His-207 lines the Co(2+) pocket.

The protein belongs to the CbiK family. As to quaternary structure, homotrimer.

It catalyses the reaction Co-sirohydrochlorin + 2 H(+) = sirohydrochlorin + Co(2+). It carries out the reaction Co-precorrin-2 + 3 H(+) = precorrin-2 + Co(2+). It functions in the pathway cofactor biosynthesis; adenosylcobalamin biosynthesis; cob(II)yrinate a,c-diamide from sirohydrochlorin (anaerobic route): step 1/10. Its function is as follows. Cobalt chelatase responsible for the insertion of cobalt during anaerobic cobalamin biosynthesis. Can catalyze the insertion of Co(2+) into either sirohydrochlorin or precorrin-2. It is not clear which is the natural substrate in Salmonella. The protein is Sirohydrochlorin cobaltochelatase of Salmonella typhimurium (strain LT2 / SGSC1412 / ATCC 700720).